The sequence spans 517 residues: Pentatricopeptide repeat-containing protein At1g77360, mitochondrial (517 aa).

The N-terminal 59 residues, 1–59, are a transit peptide targeting the mitochondrion; it reads MKRFRIRSVDFRQLVNFFSFMRWECSSSATVWVRFNMTIRIINRQSRFCCKSFLSARLY. PPR repeat units lie at residues 133-163, 167-201, 202-232, 236-270, 271-305, 306-340, 341-375, 376-406, 410-444, and 445-479; these read SVRA…MRKK, NVET…DLPP, NLVA…MRDR, DSKT…GCHP, DIVT…ICKP, TTFI…GMKA, DVAV…GVTP, NSKS…MIKV, DADT…GVFP, and SMHT…GIRP.

Belongs to the PPR family. P subfamily.

The protein resides in the mitochondrion. The chain is Pentatricopeptide repeat-containing protein At1g77360, mitochondrial from Arabidopsis thaliana (Mouse-ear cress).